A 162-amino-acid chain; its full sequence is NADPH-dependent 7-cyano-7-deazaguanine reductase (162 aa).

Catalysis depends on Cys-53, which acts as the Thioimide intermediate. Asp-60 (proton donor) is an active-site residue. Substrate contacts are provided by residues 75–77 (VES) and 94–95 (HE).

This sequence belongs to the GTP cyclohydrolase I family. QueF type 1 subfamily.

Its subcellular location is the cytoplasm. The catalysed reaction is 7-aminomethyl-7-carbaguanine + 2 NADP(+) = 7-cyano-7-deazaguanine + 2 NADPH + 3 H(+). Its pathway is tRNA modification; tRNA-queuosine biosynthesis. Its function is as follows. Catalyzes the NADPH-dependent reduction of 7-cyano-7-deazaguanine (preQ0) to 7-aminomethyl-7-deazaguanine (preQ1). The polypeptide is NADPH-dependent 7-cyano-7-deazaguanine reductase (Streptococcus mutans serotype c (strain ATCC 700610 / UA159)).